A 1626-amino-acid polypeptide reads, in one-letter code: Collagen alpha-1(XXII) chain (1626 aa).

The signal sequence occupies residues 1–27 (MAGLRGNAVAGLLWMLLLWSGGGGCQA). The region spanning 38–213 (DLVFLLDTSS…NAIDKIRGKL (176 aa)) is the VWFA domain. Residues 239–427 (GTKEITGFDL…LQRIVIYCDS (189 aa)) form the Laminin G-like domain. The N-linked (GlcNAc...) asparagine glycan is linked to Asn-375. Collagen-like domains are found at residues 481-520 (GEKGEMGVAGPMGLPGPKGDIGAIGPVGAPGPKGEKGDVG), 526-565 (QGEKGEKGSLGLPGPPGRDGSKGMRGEPGELGEPGLPGEV), 566-625 (GMRG…PGPS), 657-708 (GEQG…GIPG), 714-773 (GPPG…PGER), 774-833 (GEDG…PGLK), 868-922 (GPKG…GAPG), 925-984 (GAPG…PGKG), 1047-1095 (AGPP…PGKP), 1118-1155 (PPGPPGLPGLPGFKGDKGVPGKPGREGTEGKKGEAGPP), 1156-1215 (GLPG…AGPP), 1249-1308 (GKPG…PGKD), 1315-1374 (GPQG…PGEK), 1387-1446 (GEPG…PGPP), 1495-1550 (SQGR…PGAP), and 1575-1604 (DGLPGIPGPQGETGPAGHPGLPGPPGPPGQ). Disordered stretches follow at residues 506-1002 (PVGA…GPLG), 1019-1103 (GGQC…LLSP), 1119-1458 (PGPP…RGES), and 1491-1609 (YMKS…DPSQ). The span at 544-553 (DGSKGMRGEP) shows a compositional bias: basic and acidic residues. The segment covering 571-580 (QGPPGLPGPP) has biased composition (pro residues). A compositionally biased stretch (basic and acidic residues) spans 591 to 606 (ERGEKGTRGEKGERGL). Residues 661-670 (APGPRGHQGA) are compositionally biased toward low complexity. 2 stretches are compositionally biased toward pro residues: residues 715–728 (PPGPPGVPGPPGPG) and 742–751 (KPGPPGPTGP). 2 stretches are compositionally biased toward basic and acidic residues: residues 769–778 (EPGERGEDGL) and 815–826 (RGEKGDQGEKGE). The span at 908–939 (AHGAPGAAGNPGAPGHVGAPGPSGPPGSVGAP) shows a compositional bias: low complexity. Basic and acidic residues predominate over residues 945–957 (PGKDGERGEKGAA). 2 stretches are compositionally biased toward low complexity: residues 959–974 (EEGSPGPVGPRGDPGA) and 1056–1065 (PGDKGSPGSR). Basic and acidic residues-rich tracts occupy residues 1131-1151 (KGDKGVPGKPGREGTEGKKGE) and 1173-1185 (RGADGEVGQKGDQ). The span at 1205-1223 (ADGIAGAAGPPGIQGSPGK) shows a compositional bias: low complexity. The segment covering 1241–1250 (EEGKEGRDGK) has biased composition (basic and acidic residues). Residues 1260-1275 (AGEPGLPGPEGARGPP) are compositionally biased toward low complexity. Over residues 1379 to 1389 (KEGVPGKPGEP) the composition is skewed to low complexity. The segment covering 1391-1404 (FKGERGDPGIKGDK) has biased composition (basic and acidic residues). Positions 1405–1414 (GPPGGKGQPG) are enriched in gly residues. Over residues 1440-1449 (VGPPGPPGQP) the composition is skewed to pro residues. Over residues 1521 to 1530 (GRPGQGGLEG) the composition is skewed to gly residues. Pro residues predominate over residues 1595–1604 (LPGPPGPPGQ).

Belongs to the fibril-associated collagens with interrupted helices (FACIT) family. As to expression, restrictive expression is observed at tissue junctions such as the myotendinous junction in skeletal and heart muscle, the articular cartilage-synovial fluid junction, or the border between the anagen hair follicle and the dermis in the skin. It is deposited in the basement membrane zone of the myotendinous junction and the hair follicle and associated with the extrafibrillar matrix in cartilage.

It localises to the secreted. The protein localises to the extracellular space. It is found in the extracellular matrix. The protein resides in the cytoplasm. Acts as a cell adhesion ligand for skin epithelial cells and fibroblasts. The polypeptide is Collagen alpha-1(XXII) chain (COL22A1) (Homo sapiens (Human)).